We begin with the raw amino-acid sequence, 162 residues long: Peptide methionine sulfoxide reductase MsrA (162 aa).

The active site involves Cys-16.

It belongs to the MsrA Met sulfoxide reductase family.

The catalysed reaction is L-methionyl-[protein] + [thioredoxin]-disulfide + H2O = L-methionyl-(S)-S-oxide-[protein] + [thioredoxin]-dithiol. It catalyses the reaction [thioredoxin]-disulfide + L-methionine + H2O = L-methionine (S)-S-oxide + [thioredoxin]-dithiol. In terms of biological role, has an important function as a repair enzyme for proteins that have been inactivated by oxidation. Catalyzes the reversible oxidation-reduction of methionine sulfoxide in proteins to methionine. The protein is Peptide methionine sulfoxide reductase MsrA of Geobacter sulfurreducens (strain ATCC 51573 / DSM 12127 / PCA).